The primary structure comprises 246 residues: O-antigen export system ATP-binding protein RfbB (246 aa).

An ABC transporter domain is found at 22–246 (SGIKDLIFHP…IIELYKQAMA (225 aa)). 63 to 70 (GRNGAGKS) provides a ligand contact to ATP.

The protein belongs to the ABC transporter superfamily.

The protein localises to the cell inner membrane. May form an ATP-driven O-antigen export apparatus, in association with RfbA. This chain is O-antigen export system ATP-binding protein RfbB (rfbB), found in Klebsiella pneumoniae.